A 268-amino-acid polypeptide reads, in one-letter code: Tryptophan synthase alpha chain (268 aa).

Residues E49 and D60 each act as proton acceptor in the active site.

The protein belongs to the TrpA family. Tetramer of two alpha and two beta chains.

The catalysed reaction is (1S,2R)-1-C-(indol-3-yl)glycerol 3-phosphate + L-serine = D-glyceraldehyde 3-phosphate + L-tryptophan + H2O. It participates in amino-acid biosynthesis; L-tryptophan biosynthesis; L-tryptophan from chorismate: step 5/5. Functionally, the alpha subunit is responsible for the aldol cleavage of indoleglycerol phosphate to indole and glyceraldehyde 3-phosphate. The chain is Tryptophan synthase alpha chain from Sodalis glossinidius (strain morsitans).